We begin with the raw amino-acid sequence, 919 residues long: Glutamate receptor ionotropic, kainate 3 (919 aa).

A signal peptide spans 1-31 (MTAPWRRLRSLVWEYWAGFLVCAFWIPDSRG). Residues 32–563 (MPHVIRIGGI…VFSFLNPLSP (532 aa)) lie on the Extracellular side of the membrane. Residues Asn-70, Asn-76, Asn-278, Asn-381, Asn-415, Asn-426, and Asn-433 are each glycosylated (N-linked (GlcNAc...) asparagine). Cys-99 and Cys-350 are oxidised to a cystine. Positions 518, 520, and 525 each coordinate L-glutamate. Asn-548 and Asn-551 each carry an N-linked (GlcNAc...) asparagine glycan. A helical membrane pass occupies residues 564-584 (DIWMYVLLAYLGVSCVLFVIA). The Cytoplasmic portion of the chain corresponds to 585 to 636 (RFSPYEWYDAHPCNPGSEVVENNFTLLNSFWFGMGSLMQQGSELMPKALSTR). A helical membrane pass occupies residues 637–657 (IIGGIWWFFTLIIISSYTANL). Over 658 to 820 (AAFLTVERME…KEASALGIQK (163 aa)) the chain is Extracellular. L-glutamate contacts are provided by Ala-691, Thr-692, and Glu-739. An N-linked (GlcNAc...) asparagine glycan is attached at Asn-752. The chain crosses the membrane as a helical span at residues 821-841 (IGGIFIVLAAGLVLSVLVAVG). Topologically, residues 842 to 919 (EFIYKLRKTA…CSTSLAPVFP (78 aa)) are cytoplasmic. The residue at position 869 (Ser-869) is a Phosphoserine. A Glycyl lysine isopeptide (Lys-Gly) (interchain with G-Cter in SUMO1) cross-link involves residue Lys-887.

It belongs to the glutamate-gated ion channel (TC 1.A.10.1) family. GRIK3 subfamily. In terms of assembly, homotetramer, and heterotetramer with either GRIK4 or GRIK5. Can form functional heteromeric receptors with GRIK2. Interacts with PRKCABP. Interacts with NETO2. In terms of tissue distribution, detected in whole brain, cerebellum, brain cortex and hippocampus.

The protein resides in the cell membrane. It localises to the postsynaptic cell membrane. It carries out the reaction Ca(2+)(in) = Ca(2+)(out). Glutamate-gated receptor activity inhibited by spermine. Functionally, ionotropic glutamate receptor that functions as a cation-permeable ligand-gated ion channel, gated by L-glutamate and the glutamatergic agonist kainic acid. Binding of the excitatory neurotransmitter L-glutamate induces a conformation change, leading to the opening of the cation channel, and thereby converts the chemical signal to an electrical impulse. The receptor then desensitizes rapidly and enters a transient inactive state, characterized by the presence of bound agonist. In association with GRIK2, involved in presynaptic facilitation of glutamate release at hippocampal mossy fiber synapses. This chain is Glutamate receptor ionotropic, kainate 3 (Grik3), found in Mus musculus (Mouse).